A 402-amino-acid chain; its full sequence is MFSSHSLSYKLSSLSTEASASSGNNTLSTIQEFSGFHNVISSVCTHTETHKPKKKRGLPGNPDPDAEVIALSPKTLLATNRFVCEICNKGFQRDQNLQLHRRGHNLPWKLKQKNTKEQQKKKVYVCPETNCAHHHPSRALGDLTGIKKHFCRKHGEKKWKCEKCSKFYAVQSDWKAHTKICGTRDYRCDCGTLFSRKDTFITHRAFCDALAEESARLHSTSSSNLTNPNPNFQGHHFMFNKSSSLLFTSSPLFIEPSLSTAALSTPPTAALSATALLQKATSLSSTTFGGGGQTRSIGHHRHLTNVNEFLGVDRVMMTSASSSEYDQLVVDGFTSTWQKADRLTRDFLGLTGHGGHVSVRPGDMLEYAGGVAFPMSAYDTESHDHSFQKAYDHLGFSGAHRM.

The disordered stretch occupies residues 47-66; sequence TETHKPKKKRGLPGNPDPDA. Position 72 is a phosphoserine (S72). C2H2-type zinc fingers lie at residues 82 to 104 and 124 to 154; these read FVCE…RRGH and YVCP…CRKH. Residues 146-153 carry the Nuclear localization signal motif; that stretch reads IKKHFCRK. The C2H2-type 2; degenerate zinc-finger motif lies at 159-183; it reads WKCEKCSKFYAVQSDWKAHTKICGT. 8 residues coordinate Zn(2+): C161, C164, H177, C181, C188, C190, H203, and C207. The CCHC-type 2; atypical zinc finger occupies 186-209; the sequence is YRCDCGTLFSRKDTFITHRAFCDA. The tract at residues 196–208 is SHR-binding; the sequence is RKDTFITHRAFCD.

Its subcellular location is the nucleus. In terms of biological role, probable transcription factor. The chain is Protein indeterminate-domain 12 from Arabidopsis thaliana (Mouse-ear cress).